A 327-amino-acid polypeptide reads, in one-letter code: Pectate lyase A (327 aa).

The signal sequence occupies residues 1-19; sequence MQNLKFLIAAVSCLGPALA. Asparagine 99 carries an N-linked (GlcNAc...) asparagine glycan. Aspartate 140, aspartate 169, and aspartate 173 together coordinate Ca(2+). The active site involves arginine 226.

The protein belongs to the polysaccharide lyase 1 family. It depends on Ca(2+) as a cofactor.

It is found in the secreted. It catalyses the reaction Eliminative cleavage of (1-&gt;4)-alpha-D-galacturonan to give oligosaccharides with 4-deoxy-alpha-D-galact-4-enuronosyl groups at their non-reducing ends.. Its function is as follows. Pectinolytic enzyme consist of four classes of enzymes: pectin lyase, polygalacturonase, pectin methylesterase and rhamnogalacturonase. Among pectinolytic enzymes, pectin lyase is the most important in depolymerization of pectin, since it cleaves internal glycosidic bonds of highly methylated pectins. Favors pectate, the anion, over pectin, the methyl ester. This chain is Pectate lyase A (plyA), found in Emericella nidulans (strain FGSC A4 / ATCC 38163 / CBS 112.46 / NRRL 194 / M139) (Aspergillus nidulans).